Consider the following 381-residue polypeptide: cAMP-dependent protein kinase type I-beta regulatory subunit (381 aa).

The interval 1 to 136 is dimerization and phosphorylation; that stretch reads MASPSCFHSE…ALAKAISKNV (136 aa). Phosphoserine is present on Ser3. The residue at position 21 (Tyr21) is a 3'-nitrotyrosine. The interval 66 to 88 is disordered; the sequence is LARQKSNSQCDSHDEEISPTPPN. Residues Ser77 and Ser83 each carry the phosphoserine modification. Residue Thr85 is modified to Phosphothreonine. The Pseudophosphorylation motif motif lies at 96–100; that stretch reads RRGGV. At Arg97 the chain carries Omega-N-methylarginine. Residues 137-254, Glu202, Arg211, 255-381, Glu326, and Arg335 each bind 3',5'-cyclic AMP; these read LFSH…SKVS and ILES…SLTV.

The protein belongs to the cAMP-dependent kinase regulatory chain family. The inactive holoenzyme is composed of two regulatory chains and two catalytic chains. Activation by cAMP releases the two active catalytic monomers and the regulatory dimer. Interacts with PRKX; regulates this cAMP-dependent protein kinase. Interacts with smAKAP; this interaction may target PRKAR1B to the plasma membrane. Post-translationally, the pseudophosphorylation site binds to the substrate-binding region of the catalytic chain, resulting in the inhibition of its activity. In terms of tissue distribution, abundant in brain and testis. No expression in lung, heart, liver, spleen, kidney and skeletal muscle.

The protein resides in the cell membrane. Functionally, regulatory subunit of the cAMP-dependent protein kinases involved in cAMP signaling in cells. The protein is cAMP-dependent protein kinase type I-beta regulatory subunit (Prkar1b) of Rattus norvegicus (Rat).